A 210-amino-acid polypeptide reads, in one-letter code: 3-demethoxyubiquinol 3-hydroxylase (210 aa).

Glu-59, Glu-89, His-92, Glu-141, Glu-173, and His-176 together coordinate Fe cation.

The protein belongs to the COQ7 family. Fe cation is required as a cofactor.

Its subcellular location is the cell membrane. The catalysed reaction is a 5-methoxy-2-methyl-3-(all-trans-polyprenyl)benzene-1,4-diol + AH2 + O2 = a 3-demethylubiquinol + A + H2O. It participates in cofactor biosynthesis; ubiquinone biosynthesis. In terms of biological role, catalyzes the hydroxylation of 2-nonaprenyl-3-methyl-6-methoxy-1,4-benzoquinol during ubiquinone biosynthesis. The polypeptide is 3-demethoxyubiquinol 3-hydroxylase (Albidiferax ferrireducens (strain ATCC BAA-621 / DSM 15236 / T118) (Rhodoferax ferrireducens)).